Consider the following 628-residue polypeptide: tRNA uridine 5-carboxymethylaminomethyl modification enzyme MnmG (628 aa).

FAD-binding positions include 14–19, Val-126, and Ser-181; that span reads GAGHAG. 273 to 287 lines the NAD(+) pocket; the sequence is GPRYCPSIEDKVVRF. FAD is bound at residue Gln-370.

Belongs to the MnmG family. Homodimer. Heterotetramer of two MnmE and two MnmG subunits. FAD serves as cofactor.

It is found in the cytoplasm. Functionally, NAD-binding protein involved in the addition of a carboxymethylaminomethyl (cmnm) group at the wobble position (U34) of certain tRNAs, forming tRNA-cmnm(5)s(2)U34. This chain is tRNA uridine 5-carboxymethylaminomethyl modification enzyme MnmG, found in Exiguobacterium sibiricum (strain DSM 17290 / CCUG 55495 / CIP 109462 / JCM 13490 / 255-15).